Reading from the N-terminus, the 729-residue chain is ATP-dependent RNA helicase DHX15 homolog (729 aa).

The interval 1 to 25 (MSKRRIEVGETYGSKAKKDPEASSS) is disordered. Residues 82–246 (MRLLSLHQCI…FDNAPLMKVP (165 aa)) enclose the Helicase ATP-binding domain. Position 95-102 (95-102 (GETGSGKT)) interacts with ATP. The DEAH box motif lies at 193–196 (DEAH). In terms of domain architecture, Helicase C-terminal spans 271–451 (TVIQIHMCEE…TVVLQLKKLG (181 aa)).

This sequence belongs to the DEAD box helicase family. DEAH subfamily. DDX15/PRP43 sub-subfamily.

The enzyme catalyses ATP + H2O = ADP + phosphate + H(+). In terms of biological role, RNA helicase involved in mRNA processing and antiviral innate immunity. Acts as an activator of the p38 MAPK cascade. The chain is ATP-dependent RNA helicase DHX15 homolog from Drosophila melanogaster (Fruit fly).